The chain runs to 382 residues: Alkanesulfonate monooxygenase (382 aa).

This sequence belongs to the SsuD family.

The catalysed reaction is an alkanesulfonate + FMNH2 + O2 = an aldehyde + FMN + sulfite + H2O + 2 H(+). In terms of biological role, catalyzes the desulfonation of aliphatic sulfonates. The chain is Alkanesulfonate monooxygenase from Ectopseudomonas mendocina (strain ymp) (Pseudomonas mendocina).